The following is an 816-amino-acid chain: Ribonucleoside-diphosphate reductase large subunit (816 aa).

Positions 1 to 92 (MYVVKRDGRQ…VSNLHKNTKK (92 aa)) constitute an ATP-cone domain. ATP contacts are provided by residues 5 to 6 (KR), 11 to 17 (ETVHFDK), T53, and D57. The GDP site is built by S202 and S217. Residues C218 and C444 are joined by a disulfide bond. Residues 226–228 (DSI), K243, R256, and 263–264 (RG) contribute to the dTTP site. Residue N427 coordinates GDP. The active-site Proton acceptor is N427. C429 functions as the Cysteine radical intermediate in the catalytic mechanism. GDP is bound by residues E431 and 623–626 (TAST). The Proton acceptor role is filled by E431.

This sequence belongs to the ribonucleoside diphosphate reductase large chain family. Heterotetramer of two large/R1 and two small/R2 subunits. A radical transfer pathway may occur between 'Tyr-125' of protein R2 and R1. Contains a disulfide bonds. Binding of the substrate occurs primarily when the active-site cysteines are reduced. As to expression, highly expressed in actively growing tissues such as young leaves, shoot apices, inflorescences and carpels. Very low expression in cotyledons, adult and cauline leaves and senescent leaves.

The protein resides in the cytoplasm. It carries out the reaction a 2'-deoxyribonucleoside 5'-diphosphate + [thioredoxin]-disulfide + H2O = a ribonucleoside 5'-diphosphate + [thioredoxin]-dithiol. With respect to regulation, under complex allosteric control mediated by deoxynucleoside triphosphates and ATP binding to separate specificity and activation sites on the large subunit. The type of nucleotide bound at the specificity site determines substrate preference. It seems probable that ATP makes the enzyme reduce CDP and UDP, dGTP favors ADP reduction and dTTP favors GDP reduction. Stimulated by ATP and inhibited by dATP binding to the activity site. Provides the precursors necessary for DNA synthesis. Catalyzes the biosynthesis of deoxyribonucleotides from the corresponding ribonucleotides. R1 contains the binding sites for both substrates and allosteric effectors and carries out the actual reduction of the ribonucleotide. Ribonucleotide reductase (RNR) complex function is essential for efficient organellar DNA degradation in pollen. Involved in chloroplast division. This is Ribonucleoside-diphosphate reductase large subunit from Arabidopsis thaliana (Mouse-ear cress).